A 72-amino-acid polypeptide reads, in one-letter code: Small ribosomal subunit protein eS31 (72 aa).

Positions 32, 35, 51, and 54 each coordinate Zn(2+). Residues 32-54 (CPRCGSVMAYHKEPVPRWHCGKC) form a C4-type zinc finger.

It belongs to the eukaryotic ribosomal protein eS31 family. As to quaternary structure, part of the 30S ribosomal subunit. Zn(2+) serves as cofactor.

The chain is Small ribosomal subunit protein eS31 from Caldivirga maquilingensis (strain ATCC 700844 / DSM 13496 / JCM 10307 / IC-167).